The chain runs to 467 residues: A-type ATP synthase subunit B (467 aa).

The tract at residues 95–114 is disordered; that stretch reads GKGQPRDHMPLPPPEDFRDV.

The protein belongs to the ATPase alpha/beta chains family. In terms of assembly, has multiple subunits with at least A(3), B(3), C, D, E, F, H, I and proteolipid K(x).

The protein resides in the cell membrane. Component of the A-type ATP synthase that produces ATP from ADP in the presence of a proton gradient across the membrane. The B chain is a regulatory subunit. The polypeptide is A-type ATP synthase subunit B (Pyrobaculum neutrophilum (strain DSM 2338 / JCM 9278 / NBRC 100436 / V24Sta) (Thermoproteus neutrophilus)).